Here is a 645-residue protein sequence, read N- to C-terminus: Acetyl-coenzyme A synthetase (645 aa).

CoA-binding positions include 190–193 (RGGR) and threonine 308. ATP-binding positions include 384-386 (GEP), 408-413 (DTWWQT), aspartate 497, and arginine 512. Serine 520 provides a ligand contact to CoA. Arginine 523 serves as a coordination point for ATP. Mg(2+)-binding residues include valine 534, histidine 536, and valine 539. An N6-acetyllysine modification is found at lysine 606.

This sequence belongs to the ATP-dependent AMP-binding enzyme family. Mg(2+) is required as a cofactor. Post-translationally, acetylated. Deacetylation by the SIR2-homolog deacetylase activates the enzyme.

It carries out the reaction acetate + ATP + CoA = acetyl-CoA + AMP + diphosphate. In terms of biological role, catalyzes the conversion of acetate into acetyl-CoA (AcCoA), an essential intermediate at the junction of anabolic and catabolic pathways. AcsA undergoes a two-step reaction. In the first half reaction, AcsA combines acetate with ATP to form acetyl-adenylate (AcAMP) intermediate. In the second half reaction, it can then transfer the acetyl group from AcAMP to the sulfhydryl group of CoA, forming the product AcCoA. This is Acetyl-coenzyme A synthetase from Alkalilimnicola ehrlichii (strain ATCC BAA-1101 / DSM 17681 / MLHE-1).